A 1024-amino-acid polypeptide reads, in one-letter code: Hemolysin, plasmid (1024 aa).

Polar residues predominate over residues 20–32; it reads AANKLHSAGQSTK. A disordered region spans residues 20–39; sequence AANKLHSAGQSTKDALKKAA. The next 3 helical transmembrane spans lie at 238-260, 268-327, and 365-411; these read IGAG…ILSN, KAAA…LSIA, and DASL…GILE. Residues Lys-564 and Lys-690 are each lipidated (N6-myristoyl lysine). Hemolysin-type calcium-binding repeat units lie at residues 732–749, 750–767, 768–785, 786–803, 816–833, and 834–851; these read FGSK…DDLI, EGND…NDTL, SGGN…NDKL, IGVA…DDEF, FGGK…ADLL, and DGGE…NDIY.

The protein belongs to the RTX prokaryotic toxin (TC 1.C.11) family. In terms of processing, myristoylated by HlyC; the toxin only becomes active when modified. Mainly myristoylated, while a minor fraction is acylated with pentadecanoyl (C15:0; 26%) and heptadecanoyl (C17:0; 6%) fatty acyl groups. Fatty acylation is involved in binding to host membranes and promotes the irreversible insertion of Hemolysin into the host cell membrane. Can be activated by both myristoylation and palmitoylation, but HlyC catalyzes lysine myristoylation.

It is found in the secreted. The protein resides in the host cell membrane. Bacterial hemolysins are exotoxins that attack blood cell membranes and cause cell rupture by forming a pore. This is Hemolysin, plasmid from Escherichia coli.